Reading from the N-terminus, the 327-residue chain is GMP reductase (327 aa).

C176 functions as the Thioimidate intermediate in the catalytic mechanism. Position 205–228 (205–228 (IIADGGIRTHGDIAKSIRFGASMV)) interacts with NADP(+).

The protein belongs to the IMPDH/GMPR family. GuaC type 2 subfamily.

The catalysed reaction is IMP + NH4(+) + NADP(+) = GMP + NADPH + 2 H(+). Catalyzes the irreversible NADPH-dependent deamination of GMP to IMP. It functions in the conversion of nucleobase, nucleoside and nucleotide derivatives of G to A nucleotides, and in maintaining the intracellular balance of A and G nucleotides. The polypeptide is GMP reductase (Streptococcus pyogenes serotype M1).